The chain runs to 1182 residues: Receptor-type guanylate cyclase gcy-19 (1182 aa).

Positions 1–24 (MEYLLFLLLFAGFLTFLPRFLIYA) are cleaved as a signal peptide. Over 25-507 (QITSSTTTTT…PQSFVDQYGA (483 aa)) the chain is Extracellular. Asparagine 91, asparagine 369, asparagine 430, and asparagine 453 each carry an N-linked (GlcNAc...) asparagine glycan. The helical transmembrane segment at 508–528 (LVFAIGGVLIFAMLFVITCFF) threads the bilayer. The Cytoplasmic segment spans residues 529–1182 (YVMRQKRLER…FRRQETLALI (654 aa)). Positions 562 to 849 (RMSKRSLQSG…KGNLMDHVFN (288 aa)) constitute a Protein kinase domain. The Guanylate cyclase domain maps to 907-1037 (TVFFSDVVKF…DTVNTASRME (131 aa)). Positions 1094–1164 (VSSNSGYQSD…EAKARDIHNE (71 aa)) are disordered. The segment covering 1142-1152 (SPTLSKRSVSP) has biased composition (low complexity).

Belongs to the adenylyl cyclase class-4/guanylyl cyclase family. Expressed in IL2 sensory neurons.

It localises to the cell membrane. It carries out the reaction GTP = 3',5'-cyclic GMP + diphosphate. Functionally, guanylate cyclase involved in the production of the second messenger cGMP. This chain is Receptor-type guanylate cyclase gcy-19, found in Caenorhabditis elegans.